A 239-amino-acid chain; its full sequence is MEIFPAIDLKEGRCVRLYQGEFSKETVMNEDPVAQAIIFEKFGAKTLHIVDLDGAIAGESLNLPIIEKICKAVRIPVQVGGGIRSLVAVEKLFSVGVDKVILGTAALYDKTFLEETVRLYKEKIIVGIDAKNGFVATRGWLDVSEISYIDLAKQMEKIGVQTIVFTDISKDGTLAGPNVEQLELLQKNVATRLIASGGVASIQDVKKLNDMNIYGVIIGKALYEKTIDLEEVLEVTKLC.

Asp8 functions as the Proton acceptor in the catalytic mechanism. The active-site Proton donor is the Asp129.

The protein belongs to the HisA/HisF family.

Its subcellular location is the cytoplasm. It carries out the reaction 1-(5-phospho-beta-D-ribosyl)-5-[(5-phospho-beta-D-ribosylamino)methylideneamino]imidazole-4-carboxamide = 5-[(5-phospho-1-deoxy-D-ribulos-1-ylimino)methylamino]-1-(5-phospho-beta-D-ribosyl)imidazole-4-carboxamide. It functions in the pathway amino-acid biosynthesis; L-histidine biosynthesis; L-histidine from 5-phospho-alpha-D-ribose 1-diphosphate: step 4/9. This chain is 1-(5-phosphoribosyl)-5-[(5-phosphoribosylamino)methylideneamino] imidazole-4-carboxamide isomerase, found in Bacillus cereus (strain ZK / E33L).